The primary structure comprises 1640 residues: RING finger protein 17 (1640 aa).

The RING-type zinc finger occupies 30-73 (CTRCGRKVSVASGDHHKFPCGHAFCELCLLAPQEYTTSKCTDCE). Ser-134 carries the phosphoserine modification. The residue at position 229 (Lys-229) is an N6-acetyllysine. 2 disordered regions span residues 348 to 376 (TDETPEPPLQAEAPDRHLEGKKKQPTKEM) and 413 to 435 (DDPIETSGYPKKPPQKEQSAPVG). Over residues 360-373 (APDRHLEGKKKQPT) the composition is skewed to basic and acidic residues. Tudor domains lie at 751–809 (CPLQ…FLEP) and 985–1044 (KWEC…LKTM). Basic and acidic residues predominate over residues 1170–1184 (NEHKVPDSKGKKSES). Positions 1170–1191 (NEHKVPDSKGKKSESRSTGCYR) are disordered. 2 Tudor domains span residues 1246–1303 (SWKK…PDTP) and 1496–1556 (DFSS…LMQY).

Interacts with MXD1, MXD3, MXD4, MXI1 and PIWIL1. Self-associates. As to expression, expressed at high levels in adult testis. Expressed in male germ cells (at protein level). Expressed at lower levels in adult thyroid, submaxillary gland, ovary and epididymis.

The protein localises to the cytoplasm. The protein resides in the nucleus. Functionally, seems to be involved in regulation of transcriptional activity of MYC. In vitro, inhibits DNA-binding activity of Mad-MAX heterodimers. Can recruit Mad transcriptional repressors (MXD1, MXD3, MXD4 and MXI1) to the cytoplasm. May be involved in spermiogenesis. This chain is RING finger protein 17 (Rnf17), found in Mus musculus (Mouse).